The primary structure comprises 253 residues: Major prion protein (253 aa).

A signal peptide spans 1–22 (MANLGCWMLVLFVATWSDLGLC). Residues 23–38 (KKRPKPGGWNTGGSRY) are interaction with ADGRG6. The segment at 23–230 (KKRPKPGGWN…ESQAYYQRGS (208 aa)) is interaction with GRB2, ERI3 and SYN1. The segment at 26 to 108 (PKPGGWNTGG…WNKPSKPKTS (83 aa)) is disordered. 5 consecutive repeat copies span residues 51 to 59 (PQGGGGWGQ), 60 to 67 (PHGGGWGQ), 68 to 75 (PHGGGWGQ), 76 to 83 (PHGGGWGQ), and 84 to 91 (PHGGGWGQ). Residues 51-91 (PQGGGGWGQPHGGGWGQPHGGGWGQPHGGGWGQPHGGGWGQ) form a 5 X 8 AA tandem repeats of P-H-G-G-G-W-G-Q region. The segment covering 52–95 (QGGGGWGQPHGGGWGQPHGGGWGQPHGGGWGQPHGGGWGQGGGT) has biased composition (gly residues). Positions 61, 62, 63, 69, 70, 71, 77, 78, 79, 85, 86, and 87 each coordinate Cu(2+). Residues C179 and C214 are joined by a disulfide bond. N-linked (GlcNAc...) asparagine glycosylation is found at N181 and N197. S230 is lipidated: GPI-anchor amidated serine. Positions 231-253 (SMVLFSSPPVILLISFLIFLIVG) are cleaved as a propeptide — removed in mature form.

It belongs to the prion family. As to quaternary structure, monomer and homodimer. Has a tendency to aggregate into amyloid fibrils containing a cross-beta spine, formed by a steric zipper of superposed beta-strands. Soluble oligomers may represent an intermediate stage on the path to fibril formation. Copper binding may promote oligomerization. Interacts with GRB2, APP, ERI3/PRNPIP and SYN1. Mislocalized cytosolically exposed PrP interacts with MGRN1; this interaction alters MGRN1 subcellular location and causes lysosomal enlargement. Interacts with APP. Interacts with KIAA1191. Interacts with ADGRG6.

It localises to the cell membrane. It is found in the golgi apparatus. Functionally, its primary physiological function is unclear. May play a role in neuronal development and synaptic plasticity. May be required for neuronal myelin sheath maintenance. May promote myelin homeostasis through acting as an agonist for ADGRG6 receptor. May play a role in iron uptake and iron homeostasis. Soluble oligomers are toxic to cultured neuroblastoma cells and induce apoptosis (in vitro). Association with GPC1 (via its heparan sulfate chains) targets PRNP to lipid rafts. Also provides Cu(2+) or Zn(2+) for the ascorbate-mediated GPC1 deaminase degradation of its heparan sulfate side chains. This is Major prion protein (PRNP) from Colobus guereza (Mantled guereza).